Reading from the N-terminus, the 269-residue chain is MAASGGQKSEKLDEAQALARSCAGRPDFLPCDGLSICATHSHGKCFKLHWCCHLGWCHCKYVYQPMTSVCQLPSTAVPVAPSGHTHTMNLSISLAERFLRTAPKFQAPPCPESPKFCVISDLFVDDYMVKRINGKMCYVQRPPPPTPNPTHQPQTAAPQPVPQRSKNSHQVGPTVKQGQAKEKISAPKMDHCSSPSSSEDSGINALGLHYMESCDEDSCVDDDDEEEEDDELSTDGNSSPGSFWDQDECTLLSPSKSIVEIIEKIETTV.

2 disordered regions span residues 139-203 and 215-249; these read VQRP…DSGI and DEDS…QDEC. Positions 141 to 150 are enriched in pro residues; that stretch reads RPPPPTPNPT. Residues 151–164 are compositionally biased toward low complexity; the sequence is HQPQTAAPQPVPQR. Residues 179-191 are compositionally biased toward basic and acidic residues; it reads QAKEKISAPKMDH. Over residues 215 to 233 the composition is skewed to acidic residues; the sequence is DEDSCVDDDDEEEEDDELS.

It belongs to the UPF0524 family.

Functionally, plays a role in neuronal and neurobehavioral development. Required for normal expression of neuronal markers elavl3 and eno2 and neurobehaviors related to circadian rhythm and changes in light-dark conditions. In Danio rerio (Zebrafish), this protein is UPF0524 protein C3orf70 homolog A.